Reading from the N-terminus, the 198-residue chain is Probable thymidylate kinase (198 aa).

7 to 14 (GIDGAGKS) serves as a coordination point for ATP.

It belongs to the thymidylate kinase family.

The catalysed reaction is dTMP + ATP = dTDP + ADP. The polypeptide is Probable thymidylate kinase (Methanocorpusculum labreanum (strain ATCC 43576 / DSM 4855 / Z)).